We begin with the raw amino-acid sequence, 211 residues long: Uracil phosphoribosyltransferase (211 aa).

Residues arginine 77, arginine 102, and 129 to 137 each bind 5-phospho-alpha-D-ribose 1-diphosphate; that span reads DPMLATGGS. Uracil contacts are provided by residues isoleucine 192 and 197 to 199; that span reads GDA. Aspartate 198 contributes to the 5-phospho-alpha-D-ribose 1-diphosphate binding site.

It belongs to the UPRTase family. It depends on Mg(2+) as a cofactor.

The catalysed reaction is UMP + diphosphate = 5-phospho-alpha-D-ribose 1-diphosphate + uracil. The protein operates within pyrimidine metabolism; UMP biosynthesis via salvage pathway; UMP from uracil: step 1/1. Its activity is regulated as follows. Allosterically activated by GTP. Its function is as follows. Catalyzes the conversion of uracil and 5-phospho-alpha-D-ribose 1-diphosphate (PRPP) to UMP and diphosphate. This is Uracil phosphoribosyltransferase from Corynebacterium glutamicum (strain R).